Consider the following 610-residue polypeptide: MNSQELKKRQENIRNFSIIAHIDHGKSTLADRILEKTETVSSREMQAQLLDSMDLERERGITIKLNAIELNYKAKNGQTYIFHLIDTPGHVDFTYEVSRSLAACEGAVLVVDAAQGIEAQTLANVYLALDNDLEILPVINKIDLPAADPERVRQEIEDVIGLDASEAVLASAKSGIGIEDILEQIVEKVPAPSGDVDQPLQALIFDSVYDAYRGVILQVRVVNGMVKPGDTIQMMSNGKTFDVTEVGIFTPKAIGRNFLATGDVGYIAASIKTVADTRVGDTVTLATNPAAEPLHGYKQMNPMVFAGIYPIESNKYNDLREALEKLQLNDASLQFEPETSQALGFGFRCGFLGLLHMDVIQERLEREFNIDLIMTAPSVVYHVNTTDGDMLEVSNPSEFPDPTKVDSIEEPYVKAQIMVPQEFVGAVMELAQRKRGDFVTMDYIDDNRVNVIYHIPLAEIVFDFFDKLKSSTRGYASFDYEIAEYRRSQLVKMDILLNGDKVDALSFIVHRAFAYERGKLIVEKLKKIIPRQQFEVPIQAAIGQKIVARSDIKALRKNVLAKCYGGDVSRKRKLLEKQKAGKKRMKAIGSVEVPQEAFLSVLSMDDESKK.

The 183-residue stretch at 11–193 (ENIRNFSIIA…QIVEKVPAPS (183 aa)) folds into the tr-type G domain. GTP contacts are provided by residues 23–28 (DHGKST) and 140–143 (NKID).

The protein belongs to the TRAFAC class translation factor GTPase superfamily. Classic translation factor GTPase family. LepA subfamily.

The protein localises to the cell membrane. The enzyme catalyses GTP + H2O = GDP + phosphate + H(+). Its function is as follows. Required for accurate and efficient protein synthesis under certain stress conditions. May act as a fidelity factor of the translation reaction, by catalyzing a one-codon backward translocation of tRNAs on improperly translocated ribosomes. Back-translocation proceeds from a post-translocation (POST) complex to a pre-translocation (PRE) complex, thus giving elongation factor G a second chance to translocate the tRNAs correctly. Binds to ribosomes in a GTP-dependent manner. In Streptococcus equi subsp. zooepidemicus (strain H70), this protein is Elongation factor 4.